The chain runs to 257 residues: MAAAAGRLLWSSVARHASAISRSISASTVLRPVASRRTCLTDILWSASAQGKSAFSTSSSFHTPAVTQHAPYFKGTAVVNGEFKELSLDDFKGKYLVLFFYPLDFTFVCPTEIVAFSDKANEFHDVNCEVVAVSVDSHFSHLAWINTPRKNGGLGHMNITLLSDITKQISRDYGVLLESAGIALRGLFIIDPNGVVKHLSVNDLPVGRSVEETLRLVKAFQFVETHGEVCPANWTPESPTIKPSPTASKEYFEKVHQ.

The transit peptide at 1–62 directs the protein to the mitochondrion; the sequence is MAAAAGRLLW…SAFSTSSSFH (62 aa). In terms of domain architecture, Thioredoxin spans 64 to 222; that stretch reads PAVTQHAPYF…TLRLVKAFQF (159 aa). Position 84 is an N6-succinyllysine (lysine 84). N6-acetyllysine; alternate is present on lysine 92. Lysine 92 is modified (N6-succinyllysine; alternate). Catalysis depends on cysteine 109, which acts as the Cysteine sulfenic acid (-SOH) intermediate. Position 147 is a phosphothreonine (threonine 147).

Belongs to the peroxiredoxin family. AhpC/Prx1 subfamily. Homodimer; disulfide-linked, upon oxidation. 6 homodimers assemble to form a ring-like dodecamer. Interacts with NEK6. Interacts with LRRK2. Interacts with MAP3K13. Interacts with RPS6KC1 (via PX domain). Post-translationally, phosphorylated by LRRK2; phosphorylation reduces perodixase activity. In terms of processing, the enzyme can be inactivated by further oxidation of the cysteine sulfenic acid (C(P)-SOH) to sulphinic acid (C(P)-SO2H) and sulphonic acid (C(P)-SO3H) instead of its condensation to a disulfide bond. S-palmitoylated. Housekeeping-type gene preferentially expressed in murine erythroleukemia (MEL) cells.

It is found in the mitochondrion. It localises to the cytoplasm. The protein resides in the early endosome. It catalyses the reaction a hydroperoxide + [thioredoxin]-dithiol = an alcohol + [thioredoxin]-disulfide + H2O. Functionally, thiol-specific peroxidase that catalyzes the reduction of hydrogen peroxide and organic hydroperoxides to water and alcohols, respectively. Plays a role in cell protection against oxidative stress by detoxifying peroxides. Acts synergistically with MAP3K13 to regulate the activation of NF-kappa-B in the cytosol. Required for the maintenance of physical strength. This is Thioredoxin-dependent peroxide reductase, mitochondrial (Prdx3) from Mus musculus (Mouse).